A 75-amino-acid polypeptide reads, in one-letter code: Small ribosomal subunit protein bS18 (75 aa).

This sequence belongs to the bacterial ribosomal protein bS18 family. As to quaternary structure, part of the 30S ribosomal subunit. Forms a tight heterodimer with protein bS6.

Binds as a heterodimer with protein bS6 to the central domain of the 16S rRNA, where it helps stabilize the platform of the 30S subunit. The protein is Small ribosomal subunit protein bS18 of Pectobacterium atrosepticum (strain SCRI 1043 / ATCC BAA-672) (Erwinia carotovora subsp. atroseptica).